Reading from the N-terminus, the 470-residue chain is N amino acid transport system protein (470 aa).

The span at 1-11 (MDSQYETKKND) shows a compositional bias: basic and acidic residues. The tract at residues 1 to 21 (MDSQYETKKNDPNAIMPYPES) is disordered. Residues 1 to 56 (MDSQYETKKNDPNAIMPYPESNDEHVGEVRGLGGGIMDKEPEAQEGHAKFHRLGWK) lie on the Extracellular side of the membrane. 2 helical membrane passes run 57-77 (RLTVVLIVEAIALGSLSLPGA) and 78-98 (FATLGMVPGVILSVGMGLICI). Residues 99–131 (YTAHVIGQTKLKHPEIAHYADVGRVMFGRWGYE) are Extracellular-facing. Residues 132–152 (IISFMFVLQLIFIVGSHVLTG) form a helical membrane-spanning segment. The Cytoplasmic portion of the chain corresponds to 153–168 (TIMWGTITDNGNGTCS). 2 consecutive transmembrane segments (helical) span residues 169–189 (LVFGIVSAIILFLLAIPPSFA) and 191–211 (VAILGYIDFVSICAAILITMI). Over 212 to 236 (ATGIRSSHQEGGLAAVPWSCWPKED) the chain is Cytoplasmic. The chain crosses the membrane as a helical span at residues 237–257 (LSLAEGFIAVSNIVFAYSFAM). Over 258–275 (CQFSFMDEMHTPSDYKKS) the chain is Extracellular. A helical transmembrane segment spans residues 276-296 (IVALGLIEIFIYTVTGGVVYA). The Cytoplasmic portion of the chain corresponds to 297 to 316 (FVGPEVQSPALLSAGPLLAK). Residues 317–337 (VAFGIALPVIFISGSINTVVV) form a helical membrane-spanning segment. The Extracellular portion of the chain corresponds to 338-357 (SRYLIERIWPNNVIRYVNTP). The chain crosses the membrane as a helical span at residues 358 to 378 (AGWMVWLGFDFGITLIAWVIA). The Cytoplasmic segment spans residues 379–386 (EAIPFFSD). A helical membrane pass occupies residues 387 to 407 (LLAICSALFISGFSFYFPALM). Topologically, residues 408 to 427 (YFKITRNDAKSQGKKYFLDA) are extracellular. The helical transmembrane segment at 428-448 (LNMLCFVIGMGILGIGTYAAI) threads the bilayer. Over 449–470 (QDIMDRYDHGKVSKPYSCAPLA) the chain is Cytoplasmic.

The protein belongs to the amino acid/polyamine transporter 2 family.

The protein localises to the membrane. Its function is as follows. Required for the transport of neutral aliphatic and aromatic amino acids via the N system. The polypeptide is N amino acid transport system protein (mtr) (Neurospora crassa (strain ATCC 24698 / 74-OR23-1A / CBS 708.71 / DSM 1257 / FGSC 987)).